A 326-amino-acid polypeptide reads, in one-letter code: RNA-binding motif protein, X-linked 2 (326 aa).

Residue Lys-8 forms a Glycyl lysine isopeptide (Lys-Gly) (interchain with G-Cter in SUMO2) linkage. Residues 36-114 (AWIFVGGLPY…RTIRVDHVSN (79 aa)) enclose the RRM domain. The disordered stretch occupies residues 117–326 (APQESEDVDD…SYHGSDRRHH (210 aa)). Thr-140 carries the phosphothreonine modification. Position 149 is a phosphoserine (Ser-149). Basic residues predominate over residues 157–172 (TKKHKKDKKEKKKRKK). Polar residues predominate over residues 177 to 190 (GQAQAEQPSCSRSA). Composition is skewed to basic and acidic residues over residues 191–200 (TVKEKKDERA), 207–219 (KTSE…EHRE), 236–245 (ARAEDPECKA), and 255–273 (KSAS…ERGR). A Phosphoserine modification is found at Ser-274. Positions 291-312 (HRSRSRSRSPDKSHRHKKYRHS) are enriched in basic residues. Over residues 313–326 (RERDSYHGSDRRHH) the composition is skewed to basic and acidic residues.

The protein belongs to the IST3 family. As to quaternary structure, part of the activated spliceosome B/catalytic step 1 spliceosome, one of the forms of the spliceosome which has a well-formed active site but still cannot catalyze the branching reaction and is composed of at least 52 proteins, the U2, U5 and U6 snRNAs and the pre-mRNA. Component of the minor spliceosome, which splices U12-type introns.

It localises to the nucleus. Functionally, involved in pre-mRNA splicing as component of the activated spliceosome. As a component of the minor spliceosome, involved in the splicing of U12-type introns in pre-mRNAs. The chain is RNA-binding motif protein, X-linked 2 (Rbmx2) from Mus musculus (Mouse).